Reading from the N-terminus, the 270-residue chain is Thiazole synthase (270 aa).

The active-site Schiff-base intermediate with DXP is the Lys-112. 1-deoxy-D-xylulose 5-phosphate-binding positions include Gly-173, 199–200 (AG), and 221–222 (NS).

This sequence belongs to the ThiG family. Homotetramer. Forms heterodimers with either ThiH or ThiS.

The protein resides in the cytoplasm. It catalyses the reaction [ThiS sulfur-carrier protein]-C-terminal-Gly-aminoethanethioate + 2-iminoacetate + 1-deoxy-D-xylulose 5-phosphate = [ThiS sulfur-carrier protein]-C-terminal Gly-Gly + 2-[(2R,5Z)-2-carboxy-4-methylthiazol-5(2H)-ylidene]ethyl phosphate + 2 H2O + H(+). The protein operates within cofactor biosynthesis; thiamine diphosphate biosynthesis. Functionally, catalyzes the rearrangement of 1-deoxy-D-xylulose 5-phosphate (DXP) to produce the thiazole phosphate moiety of thiamine. Sulfur is provided by the thiocarboxylate moiety of the carrier protein ThiS. In vitro, sulfur can be provided by H(2)S. In Pseudomonas putida (strain ATCC 700007 / DSM 6899 / JCM 31910 / BCRC 17059 / LMG 24140 / F1), this protein is Thiazole synthase.